Consider the following 423-residue polypeptide: Imidazolonepropionase (423 aa).

2 residues coordinate Fe(3+): His-78 and His-80. Zn(2+) contacts are provided by His-78 and His-80. Positions 87, 150, and 183 each coordinate 4-imidazolone-5-propanoate. Residue Tyr-150 participates in N-formimidoyl-L-glutamate binding. His-247 is a Fe(3+) binding site. His-247 contacts Zn(2+). Glu-250 lines the 4-imidazolone-5-propanoate pocket. Residue Asp-322 participates in Fe(3+) binding. Asp-322 is a binding site for Zn(2+). N-formimidoyl-L-glutamate contacts are provided by Asn-324 and Gly-326. Ser-327 lines the 4-imidazolone-5-propanoate pocket.

The protein belongs to the metallo-dependent hydrolases superfamily. HutI family. Zn(2+) serves as cofactor. It depends on Fe(3+) as a cofactor.

It localises to the cytoplasm. The catalysed reaction is 4-imidazolone-5-propanoate + H2O = N-formimidoyl-L-glutamate. It functions in the pathway amino-acid degradation; L-histidine degradation into L-glutamate; N-formimidoyl-L-glutamate from L-histidine: step 3/3. In terms of biological role, catalyzes the hydrolytic cleavage of the carbon-nitrogen bond in imidazolone-5-propanoate to yield N-formimidoyl-L-glutamate. It is the third step in the universal histidine degradation pathway. The protein is Imidazolonepropionase of Bacillus cereus (strain ZK / E33L).